Reading from the N-terminus, the 277-residue chain is Sulfur carrier protein FdhD (277 aa).

Residue cysteine 121 is the Cysteine persulfide intermediate of the active site. 260–265 contributes to the Mo-bis(molybdopterin guanine dinucleotide) binding site; the sequence is FCKPGR.

Belongs to the FdhD family.

Its subcellular location is the cytoplasm. Its function is as follows. Required for formate dehydrogenase (FDH) activity. Acts as a sulfur carrier protein that transfers sulfur from IscS to the molybdenum cofactor prior to its insertion into FDH. The chain is Sulfur carrier protein FdhD from Shigella dysenteriae serotype 1 (strain Sd197).